A 342-amino-acid chain; its full sequence is Ribosomal RNA small subunit methyltransferase C (342 aa).

The protein belongs to the methyltransferase superfamily. RsmC family. In terms of assembly, monomer.

Its subcellular location is the cytoplasm. The catalysed reaction is guanosine(1207) in 16S rRNA + S-adenosyl-L-methionine = N(2)-methylguanosine(1207) in 16S rRNA + S-adenosyl-L-homocysteine + H(+). Specifically methylates the guanine in position 1207 of 16S rRNA in the 30S particle. The protein is Ribosomal RNA small subunit methyltransferase C of Shewanella loihica (strain ATCC BAA-1088 / PV-4).